A 461-amino-acid chain; its full sequence is MSVLLETSLGDIVIDLLVDECPKACENFLKLCKVKYYNFSPVHSVQKNFTFQTGDPLGPDSSESDGGSSIWGLLEGPPKRTFSLEPPPKLKHDERGTVSMATVPSPHDPDQRIAASQFIVTLGENLDYLDGKAVIFGKVVEGFDVLEKVNEAFIDDRGRPLKDIRIRHTVILDDPFDDPPGLVAPAESPLPSKAQLATVRIADDEELDDNMDEESMEKLRREREARAQALTLEMVGDLPFAEVKPPENVLFVCKLNPVTQDEDLHLIFSRFGTILSCEVIRDKRTGDSLQYAFIEFENQKDCEQAYFKMQGVLIDDHRIHVDFSQSVSKLSESWRNATISKRSGQRGGFGGVASLEKKRQYRASDNAREKENDYTLVFDKGDKAPRRRSYSRSPQRSSNRDRRASRSPRRDSYRDPYRRRPGDRSHSRSPARGEYRDKDRGRYNHRERRRDDERYRERRRR.

The PPIase cyclophilin-type domain occupies 1–171 (MSVLLETSLG…KDIRIRHTVI (171 aa)). Positions 205–234 (EELDDNMDEESMEKLRREREARAQALTLEM) form a coiled coil. The region spanning 248-326 (NVLFVCKLNP…HRIHVDFSQS (79 aa)) is the RRM domain. Positions 341 to 461 (KRSGQRGGFG…DERYRERRRR (121 aa)) are disordered. Basic and acidic residues-rich tracts occupy residues 365-384 (DNAREKENDYTLVFDKGDKA) and 398-461 (SNRD…RRRR).

It belongs to the cyclophilin-type PPIase family. PPIL4 subfamily.

It is found in the nucleus. The catalysed reaction is [protein]-peptidylproline (omega=180) = [protein]-peptidylproline (omega=0). In terms of biological role, PPIases accelerate the folding of proteins. It catalyzes the cis-trans isomerization of proline imidic peptide bonds in oligopeptides. The chain is Peptidyl-prolyl cis-trans isomerase-like 4 (cyp6) from Aspergillus oryzae (strain ATCC 42149 / RIB 40) (Yellow koji mold).